A 90-amino-acid polypeptide reads, in one-letter code: U7-theraphotoxin-Hhn1i (90 aa).

A signal peptide spans 1–19 (MKTAIFTVVLALAVFAVLS). The propeptide occupies 20 to 50 (FGWEANEKALSEEFTELIHEKEAASETEARE). 3 cysteine pairs are disulfide-bonded: Cys-51/Cys-65, Cys-58/Cys-70, and Cys-64/Cys-81.

It belongs to the neurotoxin 10 (Hwtx-1) family. 13 (Hntx-13) subfamily. In terms of tissue distribution, expressed by the venom gland.

Its subcellular location is the secreted. Ion channel inhibitor. This chain is U7-theraphotoxin-Hhn1i, found in Cyriopagopus hainanus (Chinese bird spider).